Here is a 227-residue protein sequence, read N- to C-terminus: Cytidylate kinase (227 aa).

Residue 10–18 participates in ATP binding; sequence GPSGSGKGT.

It belongs to the cytidylate kinase family. Type 1 subfamily.

It localises to the cytoplasm. It catalyses the reaction CMP + ATP = CDP + ADP. The catalysed reaction is dCMP + ATP = dCDP + ADP. The polypeptide is Cytidylate kinase (Acinetobacter baylyi (strain ATCC 33305 / BD413 / ADP1)).